The chain runs to 55 residues: uncharacterized protein (55 aa).

This is an uncharacterized protein from Bacillus subtilis (strain 168).